Reading from the N-terminus, the 229-residue chain is Histone H1 (229 aa).

Disordered regions lie at residues 1–52 (MADT…SSHP) and 125–229 (APAL…RTRK). The segment covering 32 to 45 (KEKKKVIAAKKPKS) has biased composition (basic residues). The region spanning 50–119 (SHPSFFEMIS…KVKNSFKLPS (70 aa)) is the H15 domain. Over residues 125-138 (APALAKKPTIPKPK) the composition is skewed to low complexity. A compositionally biased stretch (basic residues) spans 139 to 160 (VAAKPKTAKIGAKPKAKAKVAA). Low complexity-rich tracts occupy residues 161–177 (KTKA…PAAK) and 185–205 (KPKT…VASP). Residues 206–229 (GKKKAVPVKKVKTVKSPAGKRTRK) show a composition bias toward basic residues.

It belongs to the histone H1/H5 family.

The protein resides in the nucleus. It is found in the chromosome. Functionally, histones H1 are necessary for the condensation of nucleosome chains into higher-order structures. The protein is Histone H1 of Euphorbia esula (Leafy spurge).